Consider the following 283-residue polypeptide: D-alanine aminotransferase (283 aa).

Tyr-31 provides a ligand contact to substrate. Arg-50 is a binding site for pyridoxal 5'-phosphate. Residues Arg-98 and His-100 each coordinate substrate. Lys-144 functions as the Proton acceptor in the catalytic mechanism. The residue at position 144 (Lys-144) is an N6-(pyridoxal phosphate)lysine. Residue Glu-176 participates in pyridoxal 5'-phosphate binding.

It belongs to the class-IV pyridoxal-phosphate-dependent aminotransferase family. As to quaternary structure, homodimer. It depends on pyridoxal 5'-phosphate as a cofactor.

It catalyses the reaction D-alanine + 2-oxoglutarate = D-glutamate + pyruvate. Acts on the D-isomers of alanine, leucine, aspartate, glutamate, aminobutyrate, norvaline and asparagine. The enzyme transfers an amino group from a substrate D-amino acid to the pyridoxal phosphate cofactor to form pyridoxamine and an alpha-keto acid in the first half-reaction. The second half-reaction is the reverse of the first, transferring the amino group from the pyridoxamine to a second alpha-keto acid to form the product D-amino acid via a ping-pong mechanism. This is an important process in the formation of D-alanine and D-glutamate, which are essential bacterial cell wall components. The polypeptide is D-alanine aminotransferase (dat) (Bacillus licheniformis).